The primary structure comprises 558 residues: Putative F-box/LRR-repeat protein R542 (558 aa).

One can recognise an F-box domain in the interval 1–47 (MLLNLPYEILLIIFSLIESKKFFKLLSINKEVREFILTMLNQNPKSF). LRR repeat units follow at residues 73–105 (KSTINDDQLKYLSDVYSLNISNCKSITDRGLSF), 139–176 (CGKITDKGIENLVYGKTLNSDEPIPTVINTIRKINLQC), 177–220 (CMRI…KIDG), 251–284 (LDKLTKLILPNVPEHIEYIDFNKMPNLVKADLSG), 285–317 (CINLLDEQLKGLSKVRKLNLKECYDITDVGLSY), 329–361 (CFRITDSGLKYLSNADYVNICGCLKITNEGFFY), 369–395 (VVGYTTLSLYDCMIDGCGDYEYLTISD), 420–444 (CNNIIDVDLKSFTNLPTLSKIDLRY), 445–477 (CNNITNQGLSALCNIPIVKISNNYQISSKGISY), and 481–508 (SKKISIESCPKINSFPNLTGLKKLVFKT).

The chain is Putative F-box/LRR-repeat protein R542 from Acanthamoeba polyphaga mimivirus (APMV).